A 287-amino-acid polypeptide reads, in one-letter code: Pyridoxal kinase PdxY (287 aa).

Substrate-binding positions include Ser9 and 44-45 (MQ). ATP is bound by residues Asp111, Ala142, Glu147, and Lys180. Asp221 contacts substrate.

The protein belongs to the pyridoxine kinase family. PdxY subfamily. As to quaternary structure, homodimer. Mg(2+) serves as cofactor.

The catalysed reaction is pyridoxal + ATP = pyridoxal 5'-phosphate + ADP + H(+). Its pathway is cofactor metabolism; pyridoxal 5'-phosphate salvage; pyridoxal 5'-phosphate from pyridoxal: step 1/1. In terms of biological role, pyridoxal kinase involved in the salvage pathway of pyridoxal 5'-phosphate (PLP). Catalyzes the phosphorylation of pyridoxal to PLP. The chain is Pyridoxal kinase PdxY from Burkholderia thailandensis (strain ATCC 700388 / DSM 13276 / CCUG 48851 / CIP 106301 / E264).